Reading from the N-terminus, the 377-residue chain is Queuine tRNA-ribosyltransferase (377 aa).

The Proton acceptor role is filled by Asp89. Residues 89-93, Asp143, Gln187, and Gly214 each bind substrate; that span reads DSGGF. The interval 245-251 is RNA binding; the sequence is GVGKPED. Asp264 serves as the catalytic Nucleophile. The interval 269–273 is RNA binding; important for wobble base 34 recognition; it reads TRNAR. Residues Cys302, Cys304, Cys307, and His333 each contribute to the Zn(2+) site.

Belongs to the queuine tRNA-ribosyltransferase family. Homodimer. Within each dimer, one monomer is responsible for RNA recognition and catalysis, while the other monomer binds to the replacement base PreQ1. Requires Zn(2+) as cofactor.

It catalyses the reaction 7-aminomethyl-7-carbaguanine + guanosine(34) in tRNA = 7-aminomethyl-7-carbaguanosine(34) in tRNA + guanine. The protein operates within tRNA modification; tRNA-queuosine biosynthesis. Catalyzes the base-exchange of a guanine (G) residue with the queuine precursor 7-aminomethyl-7-deazaguanine (PreQ1) at position 34 (anticodon wobble position) in tRNAs with GU(N) anticodons (tRNA-Asp, -Asn, -His and -Tyr). Catalysis occurs through a double-displacement mechanism. The nucleophile active site attacks the C1' of nucleotide 34 to detach the guanine base from the RNA, forming a covalent enzyme-RNA intermediate. The proton acceptor active site deprotonates the incoming PreQ1, allowing a nucleophilic attack on the C1' of the ribose to form the product. After dissociation, two additional enzymatic reactions on the tRNA convert PreQ1 to queuine (Q), resulting in the hypermodified nucleoside queuosine (7-(((4,5-cis-dihydroxy-2-cyclopenten-1-yl)amino)methyl)-7-deazaguanosine). This chain is Queuine tRNA-ribosyltransferase, found in Shewanella sediminis (strain HAW-EB3).